We begin with the raw amino-acid sequence, 333 residues long: Ribosomal RNA small subunit methyltransferase H (333 aa).

S-adenosyl-L-methionine is bound by residues 36 to 38 (GGY), Asp-54, Phe-81, Asp-102, and Gln-109.

It belongs to the methyltransferase superfamily. RsmH family.

It is found in the cytoplasm. The catalysed reaction is cytidine(1402) in 16S rRNA + S-adenosyl-L-methionine = N(4)-methylcytidine(1402) in 16S rRNA + S-adenosyl-L-homocysteine + H(+). Specifically methylates the N4 position of cytidine in position 1402 (C1402) of 16S rRNA. This Afipia carboxidovorans (strain ATCC 49405 / DSM 1227 / KCTC 32145 / OM5) (Oligotropha carboxidovorans) protein is Ribosomal RNA small subunit methyltransferase H.